The chain runs to 230 residues: Fibrillarin-like rRNA/tRNA 2'-O-methyltransferase (230 aa).

Residues 87–88 (TT), 105–106 (EF), 130–131 (DA), and 150–153 (DVAQ) each bind S-adenosyl-L-methionine.

It belongs to the methyltransferase superfamily. Fibrillarin family. As to quaternary structure, interacts with nop5. Component of box C/D small ribonucleoprotein (sRNP) particles that contain rpl7ae, FlpA and nop5, plus a guide RNA.

Functionally, involved in pre-rRNA and tRNA processing. Utilizes the methyl donor S-adenosyl-L-methionine to catalyze the site-specific 2'-hydroxyl methylation of ribose moieties in rRNA and tRNA. Site specificity is provided by a guide RNA that base pairs with the substrate. Methylation occurs at a characteristic distance from the sequence involved in base pairing with the guide RNA. This chain is Fibrillarin-like rRNA/tRNA 2'-O-methyltransferase, found in Methanococcus maripaludis (strain DSM 14266 / JCM 13030 / NBRC 101832 / S2 / LL).